The chain runs to 381 residues: Methanesulfonate monooxygenase (381 aa).

Belongs to the SsuD family.

It catalyses the reaction an alkanesulfonate + FMNH2 + O2 = an aldehyde + FMN + sulfite + H2O + 2 H(+). In terms of biological role, catalyzes the desulfonation of aliphatic sulfonates. Shows highest activity with methanesulfonate. In Pseudomonas aeruginosa (strain ATCC 15692 / DSM 22644 / CIP 104116 / JCM 14847 / LMG 12228 / 1C / PRS 101 / PAO1), this protein is Methanesulfonate monooxygenase (msuD).